The primary structure comprises 953 residues: Leucine-rich repeat receptor protein kinase HPCA1 (953 aa).

The N-terminal stretch at 1–23 (MSSRTGASLLLILFFFQICSVSA) is a signal peptide. Residues 24–558 (LTNGLDASAL…EVSSKSSNKS (535 aa)) are Extracellular-facing. 6 LRR repeats span residues 64–88 (NDRV…ISFL), 89–113 (SELR…IGNL), 115–137 (KLRN…IGTL), 138–162 (KELI…GLLS), 164–187 (LYWF…TSAP), and 192–216 (LLQT…LFSS). Asparagine 182 is a glycosylation site (N-linked (GlcNAc...) asparagine). A glycan (N-linked (GlcNAc...) asparagine) is linked at asparagine 217. LRR repeat units lie at residues 218–241 (MSLI…LSLV), 242–265 (KTLT…LNNL), 266–290 (TNLN…SLTS), 292–311 (YTLD…SWIS), 313–337 (LPSL…FFSP), 339–361 (QLQT…TDVS), and 362–384 (SQLE…ANKV). N-linked (GlcNAc...) asparagine glycosylation is found at asparagine 264, asparagine 284, and asparagine 298. An N-linked (GlcNAc...) asparagine glycan is attached at asparagine 411. Intrachain disulfides connect cysteine 421–cysteine 424 and cysteine 434–cysteine 436. Asparagine 456, asparagine 459, asparagine 510, and asparagine 523 each carry an N-linked (GlcNAc...) asparagine glycan. The helical transmembrane segment at 559-579 (ILIGAVVGVVVLLLLLTIAGI) threads the bilayer. Over 580–953 (YALRQKKRAE…NFPASKLEPQ (374 aa)) the chain is Cytoplasmic. A phosphoserine mark is found at serine 606 and serine 607. In terms of domain architecture, Protein kinase spans 631 to 905 (FSEANDVGGG…EVVKEIENIM (275 aa)). Residues 637–645 (VGGGGYGKV) and lysine 659 each bind ATP. The active-site Proton acceptor is aspartate 755. Phosphothreonine is present on residues threonine 786, threonine 789, and threonine 790. Positions 912–921 (PNSDSATSSR) are enriched in polar residues. The tract at residues 912–953 (PNSDSATSSRTYEDAIKGSGDPYGSESFQYSGNFPASKLEPQ) is disordered. Serine 942 carries the post-translational modification Phosphoserine.

The protein belongs to the protein kinase superfamily. Ser/Thr protein kinase family. In terms of processing, autophosphorylated at Ser-606, Ser-607, Thr-786, Thr-789, Thr-790 and Ser-942 in response to extracellular hydrogen peroxide. Widely expressed.

Its subcellular location is the cell membrane. It carries out the reaction L-seryl-[protein] + ATP = O-phospho-L-seryl-[protein] + ADP + H(+). The catalysed reaction is L-threonyl-[protein] + ATP = O-phospho-L-threonyl-[protein] + ADP + H(+). With respect to regulation, activated by autophosphorylation on serine and threonine residues in response to extracellular hydrogen peroxide. Functionally, leucine-rich repeat receptor protein kinase that acts as sensor of extracellular hydrogen peroxide. Required for intracellular calcium influx in response to extracellular hydrogen peroxide. Mediates hydrogen peroxide-induced activation of calcium channels in guard cells and is required for stomatal closure. This chain is Leucine-rich repeat receptor protein kinase HPCA1, found in Arabidopsis thaliana (Mouse-ear cress).